A 333-amino-acid chain; its full sequence is Phosphoribosylformylglycinamidine cyclo-ligase (333 aa).

It belongs to the AIR synthase family.

The protein resides in the cytoplasm. The enzyme catalyses 2-formamido-N(1)-(5-O-phospho-beta-D-ribosyl)acetamidine + ATP = 5-amino-1-(5-phospho-beta-D-ribosyl)imidazole + ADP + phosphate + H(+). It participates in purine metabolism; IMP biosynthesis via de novo pathway; 5-amino-1-(5-phospho-D-ribosyl)imidazole from N(2)-formyl-N(1)-(5-phospho-D-ribosyl)glycinamide: step 2/2. In Methanosarcina barkeri (strain Fusaro / DSM 804), this protein is Phosphoribosylformylglycinamidine cyclo-ligase.